Here is a 487-residue protein sequence, read N- to C-terminus: Bifunctional protein GlmU (487 aa).

The tract at residues 1–240 is pyrophosphorylase; the sequence is MAEVTNCAAI…PEELSGVNDR (240 aa). Residues 12–15, Lys26, Gln83, and 88–89 contribute to the UDP-N-acetyl-alpha-D-glucosamine site; these read LAAG and GT. Residue Asp113 coordinates Mg(2+). Positions 150, 165, 180, and 238 each coordinate UDP-N-acetyl-alpha-D-glucosamine. Mg(2+) is bound at residue Asn238. The segment at 241–261 is linker; that stretch reads VQLAAAGRLLNRRMVEEAMRG. The interval 262–487 is N-acetyltransferase; the sequence is GTTIVDPDTT…DAKANDQTTN (226 aa). The UDP-N-acetyl-alpha-D-glucosamine site is built by Arg343 and Lys361. His373 acts as the Proton acceptor in catalysis. UDP-N-acetyl-alpha-D-glucosamine contacts are provided by Tyr376 and Asn387. Acetyl-CoA is bound by residues Ala390, 396-397, Ser415, and Ala433; that span reads NY. Positions 449-487 are disordered; sequence SGGKQRNIEGWVQKKRPGTPAAEAAGKAQDAKANDQTTN.

It in the N-terminal section; belongs to the N-acetylglucosamine-1-phosphate uridyltransferase family. This sequence in the C-terminal section; belongs to the transferase hexapeptide repeat family. As to quaternary structure, homotrimer. Mg(2+) is required as a cofactor.

It localises to the cytoplasm. It carries out the reaction alpha-D-glucosamine 1-phosphate + acetyl-CoA = N-acetyl-alpha-D-glucosamine 1-phosphate + CoA + H(+). The catalysed reaction is N-acetyl-alpha-D-glucosamine 1-phosphate + UTP + H(+) = UDP-N-acetyl-alpha-D-glucosamine + diphosphate. Its pathway is nucleotide-sugar biosynthesis; UDP-N-acetyl-alpha-D-glucosamine biosynthesis; N-acetyl-alpha-D-glucosamine 1-phosphate from alpha-D-glucosamine 6-phosphate (route II): step 2/2. The protein operates within nucleotide-sugar biosynthesis; UDP-N-acetyl-alpha-D-glucosamine biosynthesis; UDP-N-acetyl-alpha-D-glucosamine from N-acetyl-alpha-D-glucosamine 1-phosphate: step 1/1. It participates in bacterial outer membrane biogenesis; LPS lipid A biosynthesis. In terms of biological role, catalyzes the last two sequential reactions in the de novo biosynthetic pathway for UDP-N-acetylglucosamine (UDP-GlcNAc). The C-terminal domain catalyzes the transfer of acetyl group from acetyl coenzyme A to glucosamine-1-phosphate (GlcN-1-P) to produce N-acetylglucosamine-1-phosphate (GlcNAc-1-P), which is converted into UDP-GlcNAc by the transfer of uridine 5-monophosphate (from uridine 5-triphosphate), a reaction catalyzed by the N-terminal domain. In Corynebacterium aurimucosum (strain ATCC 700975 / DSM 44827 / CIP 107346 / CN-1) (Corynebacterium nigricans), this protein is Bifunctional protein GlmU.